Here is a 283-residue protein sequence, read N- to C-terminus: Nucleoid occlusion protein (283 aa).

The disordered stretch occupies residues M1 to E26. Residues D13 to E26 are compositionally biased toward basic and acidic residues. A DNA-binding region (H-T-H motif) is located at residues E143–L162.

It belongs to the ParB family.

The protein resides in the cytoplasm. It is found in the nucleoid. Functionally, effects nucleoid occlusion by binding relatively nonspecifically to DNA and preventing the assembly of the division machinery in the vicinity of the nucleoid, especially under conditions that disturb the cell cycle. It helps to coordinate cell division and chromosome segregation by preventing the formation of the Z ring through the nucleoid, which would cause chromosome breakage. This is Nucleoid occlusion protein from Halalkalibacterium halodurans (strain ATCC BAA-125 / DSM 18197 / FERM 7344 / JCM 9153 / C-125) (Bacillus halodurans).